A 160-amino-acid polypeptide reads, in one-letter code: Cyanate hydratase (160 aa).

Active-site residues include arginine 100, glutamate 103, and serine 126.

It belongs to the cyanase family.

It catalyses the reaction cyanate + hydrogencarbonate + 3 H(+) = NH4(+) + 2 CO2. In terms of biological role, catalyzes the reaction of cyanate with bicarbonate to produce ammonia and carbon dioxide. In Arthroderma otae (strain ATCC MYA-4605 / CBS 113480) (Microsporum canis), this protein is Cyanate hydratase.